Reading from the N-terminus, the 118-residue chain is Basic phospholipase A2 PA-13 (118 aa).

Cystine bridges form between C11–C71, C27–C117, C29–C45, C44–C98, C51–C91, C60–C84, and C78–C89. Residues Y28, G30, and G32 each contribute to the Ca(2+) site. Residue H48 is part of the active site. Position 49 (D49) interacts with Ca(2+). Residue D92 is part of the active site.

This sequence belongs to the phospholipase A2 family. Group I subfamily. D49 sub-subfamily. Requires Ca(2+) as cofactor. In terms of tissue distribution, expressed by the venom gland.

The protein localises to the secreted. The catalysed reaction is a 1,2-diacyl-sn-glycero-3-phosphocholine + H2O = a 1-acyl-sn-glycero-3-phosphocholine + a fatty acid + H(+). Functionally, PLA2 catalyzes the calcium-dependent hydrolysis of the 2-acyl groups in 3-sn-phosphoglycerides. This chain is Basic phospholipase A2 PA-13, found in Pseudechis australis (Mulga snake).